The sequence spans 535 residues: Large neutral amino acids transporter small subunit 2 (535 aa).

Residues M1–N10 are compositionally biased toward basic residues. The segment at M1–G30 is disordered. Residues M1 to S44 lie on the Cytoplasmic side of the membrane. S19, S28, and S29 each carry phosphoserine. A helical membrane pass occupies residues A45–V65. I53 is an L-leucine binding site. The Extracellular segment spans residues L66–G73. The helical transmembrane segment at L74–E95 threads the bilayer. The Cytoplasmic segment spans residues L96–G116. A helical membrane pass occupies residues L117–P149. N134 lines the L-tryptophan pocket. Residues L150–P157 are Extracellular-facing. The chain crosses the membrane as a helical span at residues D158–S178. Residues S179–R181 are Cytoplasmic-facing. A helical transmembrane segment spans residues W182–C210. The Extracellular segment spans residues K211–D230. A helical transmembrane segment spans residues I231–N252. L-leucine is bound at residue G246. Residues Y253–L265 lie on the Cytoplasmic side of the membrane. The helical transmembrane segment at P266–Y287 threads the bilayer. Residues I288 to G312 lie on the Extracellular side of the membrane. The chain crosses the membrane as a helical span at residues V313–S338. Over R339–P364 the chain is Cytoplasmic. A helical transmembrane segment spans residues I365 to S382. The Extracellular portion of the chain corresponds to D383 to T386. The helical transmembrane segment at L387–V408 threads the bilayer. L-tryptophan is bound at residue N395. The Cytoplasmic portion of the chain corresponds to L409 to N423. A run of 2 helical transmembrane segments spans residues L424–P446 and V447–G466. Residues V467–P535 are Cytoplasmic-facing. The disordered stretch occupies residues G500 to P535. Residues G524–P535 are compositionally biased toward basic and acidic residues. S529 carries the phosphoserine modification.

Belongs to the amino acid-polyamine-organocation (APC) superfamily. L-type amino acid transporter (LAT) (TC 2.A.3.8) family. As to quaternary structure, disulfide-linked heterodimer composed of the catalytic light chain subunit SLC7A8 and the heavy chain subunit SLC3A2. SLC3A2 acts as a chaperone for correct plasma membrane trafficking and stabilization of SLC7A8 and modulates the substrate affinity and specificity of SLC7A8. ICAM-1 associates with the heterodimer SLC3A2/SLC7A8; facilitates leucine uptake. In terms of tissue distribution, mainly expressed in kidney and small intestine.

It is found in the cell membrane. It localises to the basolateral cell membrane. It carries out the reaction L-histidine(in) + L-phenylalanine(out) = L-histidine(out) + L-phenylalanine(in). The catalysed reaction is L-tryptophan(in) + L-phenylalanine(out) = L-tryptophan(out) + L-phenylalanine(in). It catalyses the reaction L-isoleucine(in) + L-phenylalanine(out) = L-isoleucine(out) + L-phenylalanine(in). The enzyme catalyses L-valine(in) + L-phenylalanine(out) = L-valine(out) + L-phenylalanine(in). It carries out the reaction L-leucine(in) + L-phenylalanine(out) = L-leucine(out) + L-phenylalanine(in). The catalysed reaction is L-glutamine(in) + L-phenylalanine(out) = L-glutamine(out) + L-phenylalanine(in). It catalyses the reaction L-cysteine(in) + L-phenylalanine(out) = L-cysteine(out) + L-phenylalanine(in). The enzyme catalyses L-phenylalanine(out) + L-methionine(in) = L-phenylalanine(in) + L-methionine(out). It carries out the reaction L-leucine(out) + L-methionine(in) = L-leucine(in) + L-methionine(out). The catalysed reaction is L-cysteine(out) + L-methionine(in) = L-cysteine(in) + L-methionine(out). It catalyses the reaction S-methylmercury-L-cysteine(out) + L-methionine(in) = S-methylmercury-L-cysteine(in) + L-methionine(out). The enzyme catalyses S-methylmercury-L-cysteine(in) + L-leucine(out) = S-methylmercury-L-cysteine(out) + L-leucine(in). It carries out the reaction S-methylmercury-L-cysteine(in) + L-phenylalanine(out) = S-methylmercury-L-cysteine(out) + L-phenylalanine(in). The catalysed reaction is L-phenylalanine(out) + L-serine(in) = L-phenylalanine(in) + L-serine(out). It catalyses the reaction L-phenylalanine(out) + glycine(in) = L-phenylalanine(in) + glycine(out). The enzyme catalyses L-phenylalanine(out) + L-alanine(in) = L-phenylalanine(in) + L-alanine(out). It carries out the reaction 3,3',5-triiodo-L-thyronine(out) = 3,3',5-triiodo-L-thyronine(in). The catalysed reaction is 3,3'-diiodo-L-thyronine(out) = 3,3'-diiodo-L-thyronine(in). It catalyses the reaction L-dopa(out) + L-phenylalanine(in) = L-dopa(in) + L-phenylalanine(out). With respect to regulation, the transporter activity is inhibited by 2-aminobicyclo-(2,2,1)heptane-2-carboxylic acid (BCH) (a specific inhibitor of system L transport). Associates with SLC3A2 to form a functional heterodimeric complex that translocates small and large neutral amino acids with broad specificity and a stoichiometry of 1:1. Functions as amino acid antiporter mediating the influx of extracellular essential amino acids mainly in exchange with the efflux of highly concentrated intracellular amino acids. Has relatively symmetrical selectivities but strongly asymmetrical substrate affinities at both the intracellular and extracellular sides of the transporter. This asymmetry allows SLC7A8 to regulate intracellular amino acid pools (mM concentrations) by exchange with external amino acids (uM concentration range), equilibrating the relative concentrations of different amino acids across the plasma membrane instead of mediating their net uptake. May play an essential role in the reabsorption of neutral amino acids from the epithelial cells to the bloodstream in the kidney. Involved in the uptake of methylmercury (MeHg) when administered as the L-cysteine or D,L-homocysteine complexes, and hence plays a role in metal ion homeostasis and toxicity. Involved in the cellular activity of small molecular weight nitrosothiols, via the stereoselective transport of L-nitrosocysteine (L-CNSO) across the transmembrane. Imports the thyroid hormone diiodothyronine (T2) and to a smaller extent triiodothyronine (T3) but not rT 3 or thyroxine (T4). Mediates the uptake of L-DOPA. May participate in auditory function. In Oryctolagus cuniculus (Rabbit), this protein is Large neutral amino acids transporter small subunit 2.